The sequence spans 845 residues: Krueppel homolog 1 (845 aa).

The segment at 141-164 (QKQQQQQQHESITNAAPTAAPSAQ) is disordered. 8 consecutive C2H2-type zinc fingers follow at residues 194-216 (FKCDQCGMTFGSKSAHTSHTKSH), 271-293 (YQCNVCQKTFAVPARLIRHYRTH), 299-321 (FECEFCHKLFSVKENLQVHRRIH), 327-349 (YKCDVCGRAFEHSGKLHRHMRIH), 355-377 (HKCSVCEKTFIQSGQLVIHMRTH), 383-407 (YKCPEPGCGKGFTCSKQLKVHSRTH), 413-435 (YHCDICFRDFGYNHVLKLHRVQH), and 441-463 (YKCTICDETFKNKKEMEAHIKGH). Disordered stretches follow at residues 469 to 610 (DDEA…VQGQ) and 757 to 845 (GLRS…AKAS). Composition is skewed to low complexity over residues 474–491 (AAAASAAASTSAGSSAGS), 498–508 (SSNSESSNHSP), and 532–559 (ATLSIPTSSPLSPSSLSSTYSPSASSMA). Residues 582–591 (SGVSSAQPAH) are compositionally biased toward polar residues. Low complexity predominate over residues 759 to 775 (RSSTESPERSSSPESDS). Basic and acidic residues predominate over residues 796–809 (NKGDDGQVDSEKAS). Low complexity predominate over residues 810–823 (GDGTSAAGGAASVG).

The protein belongs to the krueppel C2H2-type zinc-finger protein family.

Plays a general role in the hierarchies of gene expression leading to metamorphosis. This chain is Krueppel homolog 1 (Kr-h1), found in Drosophila melanogaster (Fruit fly).